The following is an 847-amino-acid chain: B-cell receptor CD22 (847 aa).

A signal peptide spans 1–19; it reads MHLLGPWLLLLVLEYLAFS. The Ig-like V-type domain occupies 20-138; the sequence is DSSKWAFEHP…MERIHLNVSE (119 aa). Over 20 to 687 the chain is Extracellular; sequence DSSKWAFEHP…YYSPETIGRR (668 aa). N-linked (GlcNAc...) asparagine glycans are attached at residues Asn-67, Asn-101, and Asn-112. Residue Arg-120 coordinates N-acetylneuraminate. N-linked (GlcNAc...) asparagine glycans are attached at residues Asn-135, Asn-164, and Asn-231. Ig-like C2-type domains follow at residues 143–235, 242–326, 331–416, 419–500, 505–582, and 593–676; these read PHIQ…DTVQ, PKLE…VFLQ, PEPS…LDVQ, PKKV…VALN, PRDV…QTAS, and PRRL…STLT. A disulfide bridge links Cys-161 with Cys-219. 2 disulfides stabilise this stretch: Cys-265/Cys-309 and Cys-353/Cys-396. Residues Asn-363, Asn-428, Asn-445, Asn-448, and Asn-479 are each glycosylated (N-linked (GlcNAc...) asparagine). 2 cysteine pairs are disulfide-bonded: Cys-442-Cys-484 and Cys-529-Cys-571. N-linked (GlcNAc...) asparagine glycans are attached at residues Asn-574 and Asn-634. Cysteines 616 and 659 form a disulfide. The chain crosses the membrane as a helical span at residues 688 to 708; the sequence is VAVGFGSCLAILILAICGLKL. Residues 709-847 lie on the Cytoplasmic side of the membrane; sequence QRRWKRTQSQ…ENVDYVILKH (139 aa). Phosphoserine is present on residues Ser-725, Ser-726, and Ser-729. Short sequence motifs (ITIM motif) lie at residues 760 to 765 and 794 to 799; these read ISYTTL and VTYSVL. The residue at position 762 (Tyr-762) is a Phosphotyrosine. Residues Tyr-807, Tyr-822, and Tyr-842 each carry the phosphotyrosine modification. 2 consecutive short sequence motifs (ITIM motif) follow at residues 820 to 825 and 840 to 845; these read IHYSEL and VDYVIL.

Belongs to the immunoglobulin superfamily. SIGLEC (sialic acid binding Ig-like lectin) family. Predominantly monomer of isoform CD22-beta. Also found as heterodimer of isoform CD22-beta and a shorter isoform. Interacts with PTPN6/SHP-1, LYN, SYK, PIK3R1/PIK3R2 and PLCG1 upon phosphorylation. Interacts with GRB2, INPP5D and SHC1 upon phosphorylation. May form a complex with INPP5D/SHIP, GRB2 and SHC1. Post-translationally, phosphorylation of Tyr-762, Tyr-807 and Tyr-822 are involved in binding to SYK, GRB2 and SYK, respectively. Phosphorylation of Tyr-842 is involved in binding to SYK, PLCG2 and PIK3R1/PIK3R2. In terms of processing, phosphorylated on tyrosine residues by LYN.

It localises to the cell membrane. In terms of biological role, most highly expressed siglec (sialic acid-binding immunoglobulin-like lectin) on B-cells that plays a role in various aspects of B-cell biology including differentiation, antigen presentation, and trafficking to bone marrow. Binds to alpha 2,6-linked sialic acid residues of surface molecules such as CD22 itself, CD45 and IgM in a cis configuration. Can also bind to ligands on other cells as an adhesion molecule in a trans configuration. Acts as an inhibitory coreceptor on the surface of B-cells and inhibits B-cell receptor induced signaling, characterized by inhibition of the calcium mobilization and cellular activation. Mechanistically, the immunoreceptor tyrosine-based inhibitory motif domain is phosphorylated by the Src kinase LYN, which in turn leads to the recruitment of the protein tyrosine phosphatase 1/PTPN6, leading to the negative regulation of BCR signaling. If this negative signaling from is of sufficient strength, apoptosis of the B-cell can be induced. In Pan troglodytes (Chimpanzee), this protein is B-cell receptor CD22.